The primary structure comprises 334 residues: Methionine adenosyltransferase 2 subunit beta (334 aa).

NADP(+) is bound by residues 37-40, 60-62, 71-72, Cys93, Arg97, Tyr159, and Leu185; these read TGLL, FRR, and NL. Residue Thr309 is modified to Phosphothreonine. Positions 319 to 334 are required for interaction with MAT2A; sequence LWPFLIDKRWRQTVFH.

The protein belongs to the dTDP-4-dehydrorhamnose reductase family. MAT2B subfamily. As to quaternary structure, heterotrimer; composed of a catalytic MAT2A homodimer that binds one regulatory MAT2B chain. Heterohexamer; composed of a central, catalytic MAT2A homotetramer flanked on either side by a regulatory MAT2B chain. NADP binding increases the affinity for MAT2A.

Its pathway is amino-acid biosynthesis; S-adenosyl-L-methionine biosynthesis; S-adenosyl-L-methionine from L-methionine: step 1/1. Regulatory subunit of S-adenosylmethionine synthetase 2, an enzyme that catalyzes the formation of S-adenosylmethionine from methionine and ATP. Regulates MAT2A catalytic activity by changing its kinetic properties, increasing its affinity for L-methionine. Can bind NADP (in vitro). The chain is Methionine adenosyltransferase 2 subunit beta (Mat2b) from Mus musculus (Mouse).